A 63-amino-acid polypeptide reads, in one-letter code: MAWLADYWWIILIILIGMLINGIKELRNVDHTRFLLNKPKLPPHRDNNDKWDNEEDDWPKKKP.

A helical membrane pass occupies residues 3 to 23; it reads WLADYWWIILIILIGMLINGI. Residues 39 to 63 form a disordered region; the sequence is PKLPPHRDNNDKWDNEEDDWPKKKP.

It belongs to the UPF0370 family.

Its subcellular location is the cell membrane. The sequence is that of UPF0370 protein ECA1289 from Pectobacterium atrosepticum (strain SCRI 1043 / ATCC BAA-672) (Erwinia carotovora subsp. atroseptica).